The following is a 254-amino-acid chain: MEKKLPRRLEGKVAIVTASTQGIGFGITERFGLEGASVVVSSRKQANVDEAVAKLKSKGIDAYGIVCHVSNAQHRRNLVEKTVQKYGKIDIVVCNAAANPSTDPILSSKEAVLDKLWEINVKSSILLLQDMAPHLEKGSSVIFITSIAGFSPQGAMAMYGVTKTALLGLTKALAAEMAPDTRVNAVAPGFVPTHFASFITGSSEVREGIEEKTLLNRLGTTGDMAAAAAFLASDDSSYITGETLVVAGGMPSRL.

15-39 (IVTASTQGIGFGITERFGLEGASVV) provides a ligand contact to NADP(+). Serine 146 contributes to the substrate binding site. Tyrosine 159 functions as the Proton acceptor in the catalytic mechanism. Residues 252–254 (SRL) carry the Microbody targeting signal motif.

The protein belongs to the short-chain dehydrogenases/reductases (SDR) family.

It localises to the peroxisome. Functionally, involved with IBR3 and IBR10 in the peroxisomal beta-oxidation of indole-3-butyric acid (IBA) to form indole-3-acetic acid (IAA), a biologically active auxin. May be responsible for catalyzing the dehydrogenation step in the conversion of IBA. May be involved in the peroxisomal activation of 2,4-dichlorophenoxybutyric acid (2,4-DB), a precursor of active auxins that inhibit root growth. This chain is Short-chain dehydrogenase/reductase SDRA, found in Arabidopsis thaliana (Mouse-ear cress).